The primary structure comprises 388 residues: DNA replication and repair protein RecF (388 aa).

30–37 (GANGNGKT) is an ATP binding site.

This sequence belongs to the RecF family.

It is found in the cytoplasm. Its function is as follows. The RecF protein is involved in DNA metabolism; it is required for DNA replication and normal SOS inducibility. RecF binds preferentially to single-stranded, linear DNA. It also seems to bind ATP. This Nocardia farcinica (strain IFM 10152) protein is DNA replication and repair protein RecF.